Reading from the N-terminus, the 371-residue chain is Macronuclear solute carrier homolog CR-MSC (371 aa).

3 Solcar repeats span residues 16–111 (RMNY…FYDK), 120–208 (ARPD…CKEN), and 215–304 (PHWI…LSQF). The next 6 membrane-spanning stretches (helical) occupy residues 22-42 (FAAANVIALITHAATQPLDMV), 89-109 (TFFFRTVGYTTARVTAFGYFY), 126-146 (VAAGVLGGFIAGVVTNPIDIV), 184-204 (AGANGFKLAAICSSMTNIYDW), 221-241 (LWGTAVAVAIGTVVSMPFDMI), and 281-301 (FGSFYAGGEAYFLRLFLICYL).

The protein belongs to the mitochondrial carrier (TC 2.A.29) family.

It is found in the membrane. The sequence is that of Macronuclear solute carrier homolog CR-MSC from Oxytricha trifallax (Sterkiella histriomuscorum).